A 741-amino-acid chain; its full sequence is Catalase-peroxidase 2 (741 aa).

Positions 1–28 (MQRNRIAKSVLAALAVIAMSAGSISARA) are cleaved as a signal peptide. The segment at residues 107-228 (WHGAGTYRTY…LAATQMGLIY (122 aa)) is a cross-link (tryptophyl-tyrosyl-methioninium (Trp-Tyr) (with M-254)). Histidine 108 serves as the catalytic Proton acceptor. The tryptophyl-tyrosyl-methioninium (Tyr-Met) (with W-107) cross-link spans 228–254 (YVNPEGPNGNPDPVAAAQDIREAFGRM). Histidine 269 serves as a coordination point for heme b.

This sequence belongs to the peroxidase family. Peroxidase/catalase subfamily. Homodimer or homotetramer. Heme b is required as a cofactor. Post-translationally, formation of the three residue Trp-Tyr-Met cross-link is important for the catalase, but not the peroxidase activity of the enzyme.

The catalysed reaction is H2O2 + AH2 = A + 2 H2O. The enzyme catalyses 2 H2O2 = O2 + 2 H2O. Functionally, bifunctional enzyme with both catalase and broad-spectrum peroxidase activity. This Burkholderia vietnamiensis (strain G4 / LMG 22486) (Burkholderia cepacia (strain R1808)) protein is Catalase-peroxidase 2.